We begin with the raw amino-acid sequence, 156 residues long: Acanthoscurrin-1 (156 aa).

Residues 1–23 form the signal peptide; it reads MAFRMKLVVCIVLLSTLAVMSSA. A Lysine amide modification is found at lysine 155.

As to expression, expressed in hemocytes and secreted into the plasma following bacterial immune challenge.

The protein resides in the secreted. In terms of biological role, antimicrobial protein. Strong activity against the Gram-negative bacterium E.coli SBS363 and yeast C.albicans. No detectable activity against the Gram-positive bacterium M.luteus. This is Acanthoscurrin-1 from Acanthoscurria gomesiana (Tarantula spider).